Reading from the N-terminus, the 89-residue chain is Sec-independent protein translocase protein TatA (89 aa).

Residues 1–21 (MGGISIWQLLIIAVIVVLLFG) form a helical membrane-spanning segment. The interval 65–89 (ADKQADTNQEQAKTEDAKRHDKEQV) is disordered. Positions 76–89 (AKTEDAKRHDKEQV) are enriched in basic and acidic residues.

Belongs to the TatA/E family. As to quaternary structure, the Tat system comprises two distinct complexes: a TatABC complex, containing multiple copies of TatA, TatB and TatC subunits, and a separate TatA complex, containing only TatA subunits. Substrates initially bind to the TatABC complex, which probably triggers association of the separate TatA complex to form the active translocon.

It localises to the cell inner membrane. Functionally, part of the twin-arginine translocation (Tat) system that transports large folded proteins containing a characteristic twin-arginine motif in their signal peptide across membranes. TatA could form the protein-conducting channel of the Tat system. This chain is Sec-independent protein translocase protein TatA, found in Shigella flexneri.